The primary structure comprises 28 residues: MRKPSAFHACNIIFLPLVKCASATIMLN.

Residues 5-27 (SAFHACNIIFLPLVKCASATIML) traverse the membrane as a helical segment.

The protein localises to the membrane. This is an uncharacterized protein from Saccharomyces cerevisiae (strain ATCC 204508 / S288c) (Baker's yeast).